Reading from the N-terminus, the 471-residue chain is Probable ribonuclease FAU-1 (471 aa).

This sequence belongs to the FAU-1 family.

Probable RNase involved in rRNA stability through maturation and/or degradation of precursor rRNAs. Preferentially cleaves UA sequences in the 5' precursor region of 5S rRNA. Binds to RNA in loop regions with AU-rich sequences. This is Probable ribonuclease FAU-1 from Thermococcus kodakarensis (strain ATCC BAA-918 / JCM 12380 / KOD1) (Pyrococcus kodakaraensis (strain KOD1)).